The sequence spans 308 residues: Coenzyme PQQ synthesis protein B (308 aa).

It belongs to the PqqB family.

Its pathway is cofactor biosynthesis; pyrroloquinoline quinone biosynthesis. In terms of biological role, may be involved in the transport of PQQ or its precursor to the periplasm. The chain is Coenzyme PQQ synthesis protein B from Rhodopseudomonas palustris (strain TIE-1).